A 346-amino-acid polypeptide reads, in one-letter code: MSQPESLPFIADFPLKPHNTFGFDVRARLACRIETDAQLLAALRDPRAAGLRRLVLGGGSNVVLTGDFDGLVLLVALRGRKVVREDDEAWYVEAAAGENWHEFVSWTLAEGMPGLENLALIPGTVGAAPIQNIGAYGLEMCERFASLRAVELATGKLVELGAGACRFGYRDSFFKQEGRERFVIVSVTFRLPKVWAPRAGYTDIARQLAAVGLGDATPTPQAIFDAVVAVRRAKLPDPFVLGNAGSFFKNPVVESAQFDALAAKEPEIVSYRQADGRVKLAAGWLIDRCGWKGRTLGAAGVHERQALVLVNRGGASGTEVLALAKAIQQDVAQRFGVELEAEPVCL.

Positions 23-194 constitute an FAD-binding PCMH-type domain; the sequence is FDVRARLACR…VSVTFRLPKV (172 aa). Arginine 170 is a catalytic residue. Residue serine 246 is the Proton donor of the active site. Glutamate 342 is an active-site residue.

It belongs to the MurB family. Requires FAD as cofactor.

It localises to the cytoplasm. It carries out the reaction UDP-N-acetyl-alpha-D-muramate + NADP(+) = UDP-N-acetyl-3-O-(1-carboxyvinyl)-alpha-D-glucosamine + NADPH + H(+). It functions in the pathway cell wall biogenesis; peptidoglycan biosynthesis. Functionally, cell wall formation. The chain is UDP-N-acetylenolpyruvoylglucosamine reductase from Paraburkholderia phymatum (strain DSM 17167 / CIP 108236 / LMG 21445 / STM815) (Burkholderia phymatum).